We begin with the raw amino-acid sequence, 480 residues long: Aspartyl/glutamyl-tRNA(Asn/Gln) amidotransferase subunit B (480 aa).

It belongs to the GatB/GatE family. GatB subfamily. Heterotrimer of A, B and C subunits.

The enzyme catalyses L-glutamyl-tRNA(Gln) + L-glutamine + ATP + H2O = L-glutaminyl-tRNA(Gln) + L-glutamate + ADP + phosphate + H(+). It carries out the reaction L-aspartyl-tRNA(Asn) + L-glutamine + ATP + H2O = L-asparaginyl-tRNA(Asn) + L-glutamate + ADP + phosphate + 2 H(+). Allows the formation of correctly charged Asn-tRNA(Asn) or Gln-tRNA(Gln) through the transamidation of misacylated Asp-tRNA(Asn) or Glu-tRNA(Gln) in organisms which lack either or both of asparaginyl-tRNA or glutaminyl-tRNA synthetases. The reaction takes place in the presence of glutamine and ATP through an activated phospho-Asp-tRNA(Asn) or phospho-Glu-tRNA(Gln). The chain is Aspartyl/glutamyl-tRNA(Asn/Gln) amidotransferase subunit B from Streptococcus thermophilus (strain ATCC BAA-491 / LMD-9).